Reading from the N-terminus, the 33-residue chain is Brevinin-2Ef (33 aa).

Cysteine 27 and cysteine 33 are disulfide-bonded.

Expressed by the skin glands.

Its subcellular location is the secreted. Its function is as follows. Shows antibacterial activity against representative Gram-negative and Gram-positive bacterial species, and hemolytic activity. This chain is Brevinin-2Ef, found in Pelophylax ridibundus (Marsh frog).